Reading from the N-terminus, the 115-residue chain is Phosphorelay protein LuxU (115 aa).

The HPt domain maps to G17–Y107. The residue at position 56 (H56) is a Phosphohistidine.

As to quaternary structure, monomer.

In terms of biological role, phosphorelay protein which receives a sensory signal from a sensor kinase and transmit it to LuxO. At low cell density, a phosphoryl group is transferred from the sensor kinase, probably on His-56 and this phosphoryl group is further transferred to LuxO. The sequence is that of Phosphorelay protein LuxU (luxU) from Vibrio vulnificus (strain CMCP6).